The chain runs to 298 residues: UDP-N-acetylenolpyruvoylglucosamine reductase (298 aa).

Positions 27–191 constitute an FAD-binding PCMH-type domain; sequence TGGNADVFVM…LDATFSLELE (165 aa). Residue Arg170 is part of the active site. Residue Ser220 is the Proton donor of the active site. Residue Glu290 is part of the active site.

Belongs to the MurB family. Requires FAD as cofactor.

Its subcellular location is the cytoplasm. It catalyses the reaction UDP-N-acetyl-alpha-D-muramate + NADP(+) = UDP-N-acetyl-3-O-(1-carboxyvinyl)-alpha-D-glucosamine + NADPH + H(+). It participates in cell wall biogenesis; peptidoglycan biosynthesis. Functionally, cell wall formation. The polypeptide is UDP-N-acetylenolpyruvoylglucosamine reductase (Listeria innocua serovar 6a (strain ATCC BAA-680 / CLIP 11262)).